A 270-amino-acid polypeptide reads, in one-letter code: Phosphatidylinositol transfer protein alpha isoform (270 aa).

Residues Thr-58, Lys-60, Glu-85, Asn-89, Thr-96, and Lys-194 each contribute to the a 1,2-diacyl-sn-glycero-3-phospho-(1D-myo-inositol) site. Lys-215 is modified (N6-acetyllysine).

Belongs to the PtdIns transfer protein family. PI transfer class I subfamily. Phosphorylated by PKC in a calcium and phosphatidylserine-dependent manner.

The protein resides in the cytoplasm. The protein localises to the nucleus. The enzyme catalyses a 1,2-diacyl-sn-glycero-3-phosphocholine(in) = a 1,2-diacyl-sn-glycero-3-phosphocholine(out). The catalysed reaction is a 1,2-diacyl-sn-glycero-3-phospho-(1D-myo-inositol)(in) = a 1,2-diacyl-sn-glycero-3-phospho-(1D-myo-inositol)(out). In terms of biological role, catalyzes the transfer of phosphatidylinositol (PI) and phosphatidylcholine (PC) between membranes. Shows a preference for PI and PC containing shorter saturated or monosaturated acyl chains at the sn-1 and sn-2 positions. Preference order for PC is C16:1 &gt; C16:0 &gt; C18:1 &gt; C18:0 &gt; C20:4 and for PI is C16:1 &gt; C16:0 &gt; C18:1 &gt; C18:0 &gt; C20:4 &gt; C20:3. In Bos taurus (Bovine), this protein is Phosphatidylinositol transfer protein alpha isoform (PITPNA).